Reading from the N-terminus, the 456-residue chain is Adenylosuccinate lyase (456 aa).

N(6)-(1,2-dicarboxyethyl)-AMP contacts are provided by residues 15 to 16 (RY), 90 to 92 (NHD), and 122 to 123 (TS). Catalysis depends on histidine 171, which acts as the Proton donor/acceptor. Glutamine 247 is a N(6)-(1,2-dicarboxyethyl)-AMP binding site. Serine 295 acts as the Proton donor/acceptor in catalysis. Residues serine 296, 301 to 303 (KIN), asparagine 309, arginine 335, and 340 to 344 (STVLR) contribute to the N(6)-(1,2-dicarboxyethyl)-AMP site.

Belongs to the lyase 1 family. Adenylosuccinate lyase subfamily. Homotetramer. Residues from neighboring subunits contribute catalytic and substrate-binding residues to each active site.

It catalyses the reaction N(6)-(1,2-dicarboxyethyl)-AMP = fumarate + AMP. The catalysed reaction is (2S)-2-[5-amino-1-(5-phospho-beta-D-ribosyl)imidazole-4-carboxamido]succinate = 5-amino-1-(5-phospho-beta-D-ribosyl)imidazole-4-carboxamide + fumarate. It participates in purine metabolism; AMP biosynthesis via de novo pathway; AMP from IMP: step 2/2. It functions in the pathway purine metabolism; IMP biosynthesis via de novo pathway; 5-amino-1-(5-phospho-D-ribosyl)imidazole-4-carboxamide from 5-amino-1-(5-phospho-D-ribosyl)imidazole-4-carboxylate: step 2/2. In terms of biological role, catalyzes two reactions in de novo purine nucleotide biosynthesis. Catalyzes the breakdown of 5-aminoimidazole- (N-succinylocarboxamide) ribotide (SAICAR or 2-[5-amino-1-(5-phospho-beta-D-ribosyl)imidazole-4-carboxamido]succinate) to 5-aminoimidazole-4-carboxamide ribotide (AICAR or 5-amino-1-(5-phospho-beta-D-ribosyl)imidazole-4-carboxamide) and fumarate, and of adenylosuccinate (ADS or N(6)-(1,2-dicarboxyethyl)-AMP) to adenosine monophosphate (AMP) and fumarate. This Buchnera aphidicola subsp. Schizaphis graminum (strain Sg) protein is Adenylosuccinate lyase (purB).